Reading from the N-terminus, the 313-residue chain is MDDNGDVHFCHRATAVVALLLLHLVVVANAAAHSCDWCTPRHSTVSILPTPTHAAHLTGGACGFGAAPMELNVAAVTADLFRHGHACGACYQLRCRDRRLCGEDGVKVVVADMAKQPEQEGEMNRTAGGSLQFRITEDAFAAMAKQGVSAHELTRQRTLEVDFRRIPCEYRESRRLAVRVEEASRNPTHLAIRFLYQGGQTDIAAVEIAQANATPPSSSYYSSWRYMTRRDGAPGVWTTSRAPVGPLRLRVVVTAGSGGKWLRSDGEVLPADWRPGEVYDTGLRVTDVAVRSCSLSCAIQDMDSDDGEEEELR.

An N-terminal signal peptide occupies residues 1–30 (MDDNGDVHFCHRATAVVALLLLHLVVVANA). Positions 59–173 (GGACGFGAAP…RRIPCEYRES (115 aa)) constitute an Expansin-like EG45 domain. Asparagine 124 carries an N-linked (GlcNAc...) asparagine glycan. One can recognise an Expansin-like CBD domain in the interval 188 to 281 (THLAIRFLYQ…DWRPGEVYDT (94 aa)).

Belongs to the expansin family. Expansin-like A subfamily.

It is found in the secreted. In Oryza sativa subsp. japonica (Rice), this protein is Expansin-like A4 (EXLA4).